We begin with the raw amino-acid sequence, 786 residues long: DNA repair and recombination protein RAD54-like (786 aa).

Residues 2–9 (RRSLAPSQ) form a required for chromatin remodeling, strand pairing activities and coupling of ATPase activity region. Threonine 22 carries the phosphothreonine modification. Residues 165–340 (EGKRGSFNGC…FSLVNFVNPE (176 aa)) form the Helicase ATP-binding domain. Residue 178-185 (DEMGLGKT) coordinates ATP. A DEGH box motif is present at residues 291–294 (DEGH). The region spanning 497–654 (LLDFMLAAIR…NNESVEKHFT (158 aa)) is the Helicase C-terminal domain. The disordered stretch occupies residues 738 to 786 (EAKPAATTTDEDEELSDSKRKAKKTLASDDDDDEDFVLNCSSGEEFSGF). The span at 776 to 786 (NCSSGEEFSGF) shows a compositional bias: polar residues.

Belongs to the SNF2/RAD54 helicase family. In terms of assembly, interacts (via N-terminus) with spn-A/Rad51.

It is found in the nucleus. Its function is as follows. Involved in mitotic DNA repair and meiotic recombination. Functions in the recombinational DNA repair pathway. Essential for interhomolog gene conversion (GC), but may have a less important role in intersister GC than spn-A/Rad51. In the presence of DNA, spn-A/Rad51 enhances the ATPase activity of okr/Rad54. This is DNA repair and recombination protein RAD54-like from Drosophila grimshawi (Hawaiian fruit fly).